A 361-amino-acid polypeptide reads, in one-letter code: MVKLFIGNLPREATEQEIRSLFEQYGKVLECDIIKNYGFVHIEDKTAAEDAIRNLHHYKLHGVNINVEASKNKSKASTKLHVGNISPTCTNQELRAKFEEYGPVIECDIVKDYAFVHMERAEDAVEAIRGLDNTEFQGKRMHVQLSTSRLRTAPGMGDQSGCYRCGKEGHWSKECPIDRSGRVADLTEQYNEQYGAVRTPYTMSYGDSLYYNNTYGALDAYYKRCRAARSYEAVAAAAASAYSNYAEQTLSQLPQVQNTAMASHLTSTSLDPYNRHLLPPSGAAAAAAAAAACTAASTSYYGRDRSPLRRATGPVLTVGEGYGYGHDSELSQASAAARNSLYDMARYEREQYADRARYSAF.

2 consecutive RRM domains span residues 2-72 (VKLF…ASKN) and 78-148 (TKLH…LSTS). Lys-79 is covalently cross-linked (Glycyl lysine isopeptide (Lys-Gly) (interchain with G-Cter in SUMO2)). Ser-86 carries the post-translational modification Phosphoserine. The CCHC-type zinc finger occupies 160-177 (SGCYRCGKEGHWSKECPI). The interaction with TNPO3 stretch occupies residues 196 to 361 (AVRTPYTMSY…YADRARYSAF (166 aa)). Phosphoserine is present on Ser-306.

Interacts with TNPO3; the interaction mediates nuclear import of the protein and is disrupted by nuclear Ran bound to GTP. Interacts with EIF4G1 and WT1. Interacts with EIF4A1; the interaction is modulated under stress-induced conditions. Interacts with AGO1. Interacts with AGO2; the interaction occurs under both cell proliferation and differentiation conditions and in an RNA- and phosphorylation-independent manner. Interacts with DDX5; the interaction occurs in an RNA-independent manner. Interacts with RBPMS; the interaction allows cooperative assembly of RNA-bound stable cell-specific alternative splicing regulatory complexes. Phosphorylated. Phosphorylated in vitro on Ser-306 by SRPK1. Phosphorylation on Ser-306 is induced upon cell stress signaling, which alters its subcellular localization and may modulate its activity on IRES-mediated mRNA translation. Phosphorylated. Phosphorylation on Ser-306 is induced upon cell muscle differentiation. Expressed in the suprachiasmatic nucleus (SCN). Expressed in myocytes; expression gradually increases during muscle cell differentiation (at protein level). Expressed in the suprachiasmatic nucleus (SCN).

Its subcellular location is the nucleus. It localises to the nucleolus. The protein resides in the nucleus speckle. It is found in the cytoplasm. The protein localises to the cytoplasmic granule. Its function is as follows. RNA-binding factor involved in multiple aspects of cellular processes like alternative splicing of pre-mRNA and translation regulation. Modulates alternative 5'-splice site and exon selection. Acts as a muscle cell differentiation-promoting factor. Activates exon skipping of the PTB pre-mRNA during muscle cell differentiation. Antagonizes the activity of the splicing factor PTBP1 to modulate muscle cell-specific exon selection of alpha tropomyosin. Binds to intronic pyrimidine-rich sequence of the TPM1 and MAPT pre-mRNAs. Required for the translational activation of PER1 mRNA in response to circadian clock. Binds directly to the 3'-UTR of the PER1 mRNA. Exerts a suppressive activity on Cap-dependent translation via binding to CU-rich responsive elements within the 3'UTR of mRNAs, a process increased under stress conditions or during myocytes differentiation. Recruits EIF4A1 to stimulate IRES-dependent translation initiation in respons to cellular stress. Associates to internal ribosome entry segment (IRES) in target mRNA species under stress conditions. Plays a role for miRNA-guided RNA cleavage and translation suppression by promoting association of AGO2-containing miRNPs with their cognate target mRNAs. Associates with miRNAs during muscle cell differentiation. Binds preferentially to 5'-CGCGCG[GCA]-3' motif in vitro. The chain is RNA-binding protein 4 (Rbm4) from Mus musculus (Mouse).